Here is a 221-residue protein sequence, read N- to C-terminus: MNNTILILKNISKHYSQGKTIVRVLDDLNLTVNEGELIAIIGSSGSGKSTLLHIAGLLDKPTKGQVIIPNSKYQKYHLIRLHYLGFIYQQHHLLKDFTALENVIMPRLISGLDQKEAIEDATKILDDLGLGKKLYNMPGELSGGEKQRVAIARSLINKPKIILADEPTGNLDPKTTNEVFNLFLKVAREQNTAIIMVTHNYELAHKMDKLYKLKHRLLNIA.

Positions 6 to 220 constitute an ABC transporter domain; the sequence is LILKNISKHY…YKLKHRLLNI (215 aa). 42–49 contacts ATP; the sequence is GSSGSGKS.

It belongs to the ABC transporter superfamily. Lipoprotein translocase (TC 3.A.1.125) family. In terms of assembly, the complex is composed of two ATP-binding proteins (LolD) and two transmembrane proteins (LolC and LolE).

It localises to the cell inner membrane. Functionally, part of the ABC transporter complex LolCDE involved in the translocation of mature outer membrane-directed lipoproteins, from the inner membrane to the periplasmic chaperone, LolA. Responsible for the formation of the LolA-lipoprotein complex in an ATP-dependent manner. This is Lipoprotein-releasing system ATP-binding protein LolD from Rickettsia conorii (strain ATCC VR-613 / Malish 7).